A 485-amino-acid chain; its full sequence is Neuropeptide F receptor (485 aa).

At 1-91 (MIISMNQTEP…DSPWYHMLIS (91 aa)) the chain is on the extracellular side. Residues 92-112 (MYGVLIVFGALGNTLVVIAVI) form a helical membrane-spanning segment. The Cytoplasmic segment spans residues 113–122 (RKPIMRTARN). Residues 123-143 (LFILNLAISDLLLCLVTMPLT) form a helical membrane-spanning segment. Over 144–163 (LMEILSKYWPYGSCSILCKT) the chain is Extracellular. Cysteine 161 and cysteine 248 are joined by a disulfide. The helical transmembrane segment at 164–184 (IAMLQALCIFVSTISITAIAF) threads the bilayer. Residues 185–202 (DRYQVIVYPTRDSLQFVG) are Cytoplasmic-facing. Residues 203-223 (AVTILAGIWALALLLASPLFV) form a helical membrane-spanning segment. Over 224 to 262 (YKELINTDTPALLQQIGLQDTIPYCIEDWPSRNGRFYYS) the chain is Extracellular. Residues 263-283 (IFSLCVQYLVPILIVSVAYFG) traverse the membrane as a helical segment. The Cytoplasmic portion of the chain corresponds to 284–317 (IYNKLKSRITVVAVQASSAQRKVERGRRMKRTNC). A helical membrane pass occupies residues 318-338 (LLISIAIIFGVSWLPLNFFNL). Residues 339 to 355 (YADMERSPVTQSMLVRY) are Extracellular-facing. A helical transmembrane segment spans residues 356 to 376 (AICHMIGMSSACSNPLLYGWL). Residues 377-485 (NDNFRKEFQE…PSEVTKLMPR (109 aa)) lie on the Cytoplasmic side of the membrane.

The protein belongs to the G-protein coupled receptor 1 family. As to expression, expressed in midgut, brain lobes and ventral nerve cord of larvae. In adults, expressed in a pair of dorsolateral neurons in the protocerebrum, and the central complex and a small number of neurons in the subesophageal ganglion (at protein level). Expressed in a subset of sugar-responsive PAIN neurons in the thoracic body but is absent from other peripheral PAIN neurons.

It localises to the membrane. In terms of biological role, receptor for NPF. Integral part of the sensory system that mediates food signaling, providing the neural basis for the regulation of food response; coordinates larval foraging and social behavior changes during development. Required in dopaminergic (DA) neurons that innervate the mushroom body for satiety to suppress appetitive memory performance; a key factor in the internal state of hunger in the brain. NPF neurons coordinately modulate diverse sensory and motor neurons important for feeding, flight, and locomotion. NPF/NPFR pathway exerts its suppressive effect on larval aversion to diverse stressful stimuli (chemical stress and noxious heat) through attenuation of TRP channel-induced neuronal excitation. NPF neural signaling system plays a physiological role in acute modulation of alcohol sensitivity in adults, rather than a general response to intoxication by sedative agents. Activation and inhibition of the NPF system reduces and enhances ethanol preference, respectively. Sexual experience, the NPF system activity and ethanol consumption are all linked; sexual deprivation is a major contributor to enhanced ethanol preference. This is Neuropeptide F receptor from Drosophila melanogaster (Fruit fly).